The primary structure comprises 239 residues: Small ribosomal subunit protein uS2 (239 aa).

Belongs to the universal ribosomal protein uS2 family.

This chain is Small ribosomal subunit protein uS2, found in Francisella tularensis subsp. novicida (strain U112).